Consider the following 558-residue polypeptide: Urocanate hydratase (558 aa).

Residues 54–55, glutamine 132, 178–180, glutamate 198, 244–245, 265–269, 275–276, and tyrosine 324 each bind NAD(+); these read GG, GMG, NA, QTSAH, and YL. The active site involves cysteine 412. An NAD(+)-binding site is contributed by glycine 494.

Belongs to the urocanase family. NAD(+) is required as a cofactor.

It localises to the cytoplasm. The catalysed reaction is 4-imidazolone-5-propanoate = trans-urocanate + H2O. It participates in amino-acid degradation; L-histidine degradation into L-glutamate; N-formimidoyl-L-glutamate from L-histidine: step 2/3. Catalyzes the conversion of urocanate to 4-imidazolone-5-propionate. The polypeptide is Urocanate hydratase (Acinetobacter baumannii (strain SDF)).